A 154-amino-acid polypeptide reads, in one-letter code: Urease subunit alpha (154 aa).

Positions 38–154 constitute a Urease domain; it reads GGIDTHIHFI…ADEMDIQVAI (117 aa). Positions 43, 45, and 126 each coordinate Ni(2+). Residue Lys126 is modified to N6-carboxylysine. Residue His128 coordinates substrate.

It belongs to the metallo-dependent hydrolases superfamily. Urease alpha subunit family. As to quaternary structure, heterotrimer of UreA (gamma), UreB (beta) and UreC (alpha) subunits. Three heterotrimers associate to form the active enzyme. It depends on Ni cation as a cofactor. Post-translationally, carboxylation allows a single lysine to coordinate two nickel ions.

Its subcellular location is the cytoplasm. The enzyme catalyses urea + 2 H2O + H(+) = hydrogencarbonate + 2 NH4(+). The protein operates within nitrogen metabolism; urea degradation; CO(2) and NH(3) from urea (urease route): step 1/1. In Photobacterium damselae subsp. damselae (Listonella damsela), this protein is Urease subunit alpha (ureC).